Here is a 351-residue protein sequence, read N- to C-terminus: Meiotically up-regulated gene 1 protein (351 aa).

The protein localises to the cytoplasm. Functionally, required for correct meiotic chromosome segregation. The sequence is that of Meiotically up-regulated gene 1 protein (mug1) from Schizosaccharomyces pombe (strain 972 / ATCC 24843) (Fission yeast).